The chain runs to 231 residues: Ubiquinone biosynthesis protein coq-4, mitochondrial (231 aa).

Zn(2+)-binding residues include His133, Asp134, His137, and Glu149.

Belongs to the COQ4 family. Component of a multi-subunit COQ enzyme complex. The cofactor is Zn(2+).

Its subcellular location is the mitochondrion inner membrane. It carries out the reaction a 4-hydroxy-3-methoxy-5-(all-trans-polyprenyl)benzoate + H(+) = a 2-methoxy-6-(all-trans-polyprenyl)phenol + CO2. It functions in the pathway cofactor biosynthesis; ubiquinone biosynthesis. In terms of biological role, lyase that catalyzes the C1-decarboxylation of 4-hydroxy-3-methoxy-5-(all-trans-polyprenyl)benzoic acid into 2-methoxy-6-(all-trans-polyprenyl)phenol during ubiquinone biosynthesis. The protein is Ubiquinone biosynthesis protein coq-4, mitochondrial of Caenorhabditis elegans.